The following is a 208-amino-acid chain: Small ribosomal subunit protein uS4 (208 aa).

The disordered stretch occupies residues 24–52 (GVKPFDVKTKKANKAPGQHGQARGGKQSE). In terms of domain architecture, S4 RNA-binding spans 98-160 (SRLDNVVYRM…AKQQLRIKNA (63 aa)).

Belongs to the universal ribosomal protein uS4 family. Part of the 30S ribosomal subunit. Contacts protein S5. The interaction surface between S4 and S5 is involved in control of translational fidelity.

One of the primary rRNA binding proteins, it binds directly to 16S rRNA where it nucleates assembly of the body of the 30S subunit. Functionally, with S5 and S12 plays an important role in translational accuracy. The chain is Small ribosomal subunit protein uS4 from Acinetobacter baumannii (strain ACICU).